Here is a 449-residue protein sequence, read N- to C-terminus: 4-aminobutyrate aminotransferase (449 aa).

Residue K294 is modified to N6-(pyridoxal phosphate)lysine.

Belongs to the class-III pyridoxal-phosphate-dependent aminotransferase family. Pyridoxal 5'-phosphate is required as a cofactor.

The catalysed reaction is 4-aminobutanoate + 2-oxoglutarate = succinate semialdehyde + L-glutamate. It catalyses the reaction (S)-3-amino-2-methylpropanoate + 2-oxoglutarate = 2-methyl-3-oxopropanoate + L-glutamate. It participates in amino-acid degradation; 4-aminobutanoate degradation. The protein is 4-aminobutyrate aminotransferase (gabT) of Mycobacterium bovis (strain ATCC BAA-935 / AF2122/97).